The primary structure comprises 353 residues: Nicotinate-nucleotide--dimethylbenzimidazole phosphoribosyltransferase (353 aa).

Catalysis depends on Glu-319, which acts as the Proton acceptor.

This sequence belongs to the CobT family.

The enzyme catalyses 5,6-dimethylbenzimidazole + nicotinate beta-D-ribonucleotide = alpha-ribazole 5'-phosphate + nicotinate + H(+). The protein operates within nucleoside biosynthesis; alpha-ribazole biosynthesis; alpha-ribazole from 5,6-dimethylbenzimidazole: step 1/2. Catalyzes the synthesis of alpha-ribazole-5'-phosphate from nicotinate mononucleotide (NAMN) and 5,6-dimethylbenzimidazole (DMB). The chain is Nicotinate-nucleotide--dimethylbenzimidazole phosphoribosyltransferase from Syntrophobacter fumaroxidans (strain DSM 10017 / MPOB).